A 603-amino-acid chain; its full sequence is Elongation factor 4 (603 aa).

The region spanning 7 to 189 is the tr-type G domain; it reads VRIRNFCIIA…AVVERIPPPP (183 aa). Residues 19–24 and 136–139 contribute to the GTP site; these read DHGKST and NKID.

This sequence belongs to the TRAFAC class translation factor GTPase superfamily. Classic translation factor GTPase family. LepA subfamily.

It localises to the cell inner membrane. The enzyme catalyses GTP + H2O = GDP + phosphate + H(+). Required for accurate and efficient protein synthesis under certain stress conditions. May act as a fidelity factor of the translation reaction, by catalyzing a one-codon backward translocation of tRNAs on improperly translocated ribosomes. Back-translocation proceeds from a post-translocation (POST) complex to a pre-translocation (PRE) complex, thus giving elongation factor G a second chance to translocate the tRNAs correctly. Binds to ribosomes in a GTP-dependent manner. The sequence is that of Elongation factor 4 from Nostoc punctiforme (strain ATCC 29133 / PCC 73102).